The chain runs to 385 residues: SH3 domain-binding protein 5-like (385 aa).

The interval 1 to 58 (MAELRQIPGGRETPQGELRPEVVEDEVPRSPVAEEPGGGGSNSSEAKLSPREEEELDP) is disordered. T13 is modified (phosphothreonine). Residues 18–28 (LRPEVVEDEVP) show a composition bias toward basic and acidic residues. Phosphoserine occurs at positions 30 and 49. Coiled coils occupy residues 59-140 (RIQE…YERA) and 169-272 (WQEM…EQIH). The disordered stretch occupies residues 272–328 (HARRRGQPAHTPGQRRSSPVGAEAGPDGGEDADSGIIEGAEGGGLEEGVSLGPGAAP). Positions 318-328 (EGVSLGPGAAP) are enriched in low complexity. S343, S350, S358, and S362 each carry phosphoserine. The segment at 359 to 385 (DHTSLDGQELGPRSGGRGGRHQRSISL) is disordered. The span at 376 to 385 (GGRHQRSISL) shows a compositional bias: basic residues.

Belongs to the SH3BP5 family.

Functions as a guanine nucleotide exchange factor (GEF) for RAB11A. The polypeptide is SH3 domain-binding protein 5-like (SH3BP5L) (Bos taurus (Bovine)).